The sequence spans 202 residues: Snake venom metalloproteinase TM-1 (202 aa).

At Gln-1 the chain carries Pyrrolidone carboxylic acid. Residues 7–202 (RYVMLAIVAD…TNPQCILNAP (196 aa)) form the Peptidase M12B domain. Disulfide bonds link Cys-118–Cys-197, Cys-159–Cys-181, and Cys-161–Cys-164. His-143 is a binding site for Zn(2+). Glu-144 is a catalytic residue. Residues His-147 and His-153 each contribute to the Zn(2+) site.

The protein belongs to the venom metalloproteinase (M12B) family. P-I subfamily. As to quaternary structure, monomer. Zn(2+) serves as cofactor. In terms of processing, the N-terminus is blocked. Not glycosylated. In terms of tissue distribution, expressed by the venom gland.

It localises to the secreted. With respect to regulation, inhibited by EDTA and 1,10-phenanthroline. Is also inhibited by endogenous tripeptide inhibitors pyroGlu-Asn-Trp, pyroGlu-Gln-Trp, and pyroGlu-Lys-Trp. Its function is as follows. Potent fibrinogenolytic protease which cleaves mainly the Aalpha (FGA) and Bbeta (FGB) chains of fibrinogen and slightly the gamma chain (FGG). Shows preference for substrates having a moderate-size and hydrophobic residue at the P1' position. Preferentially cleaves Ala-|-Leu and Tyr-|-Leu bonds. Is more susceptible to tripeptide inhibitors than TM-3 (AC O57413). This chain is Snake venom metalloproteinase TM-1, found in Protobothrops mucrosquamatus (Taiwan habu).